The chain runs to 100 residues: Large ribosomal subunit protein bL21 (100 aa).

This sequence belongs to the bacterial ribosomal protein bL21 family. As to quaternary structure, part of the 50S ribosomal subunit. Contacts protein L20.

Functionally, this protein binds to 23S rRNA in the presence of protein L20. The polypeptide is Large ribosomal subunit protein bL21 (Mycoplasma capricolum subsp. capricolum (strain California kid / ATCC 27343 / NCTC 10154)).